The chain runs to 321 residues: Fructose-1,6-bisphosphatase 2 class 2 (321 aa).

Positions 32, 56, 84, and 87 each coordinate Mn(2+). Substrate contacts are provided by residues 87 to 89 (EGT), Tyr118, 163 to 165 (KPR), 185 to 187 (DGD), and Gly209. Position 212 (Glu212) interacts with Mn(2+).

Belongs to the FBPase class 2 family. As to quaternary structure, homodimer. Requires Mn(2+) as cofactor.

The enzyme catalyses beta-D-fructose 1,6-bisphosphate + H2O = beta-D-fructose 6-phosphate + phosphate. Competitively inhibited by low concentrations of phosphate (IC50 of 1.2 mM) and is also sensitive to Li(+) (IC50 of 15.8 mM). Also inhibited by 1 mM ATP or 50 mM KCl (60% and 20% residual activity, respectively). Slightly activated (40-50%) by the addition of 1 mM dithiothreitol in vitro. In terms of biological role, catalyzes the hydrolysis of fructose 1,6-bisphosphate to fructose 6-phosphate. Also displays a low activity toward glucose 1,6-bisphosphate, and no activity against ribulose 1,5-bisphosphate, fructose 2,6-bisphosphate, or fructose 1-phosphate. The sequence is that of Fructose-1,6-bisphosphatase 2 class 2 (yggF) from Escherichia coli (strain K12).